Here is a 231-residue protein sequence, read N- to C-terminus: uncharacterized protein (231 aa).

The Response regulatory domain maps to 4–116 (RILVVEDDED…ELHARVIAQL (113 aa)). Asp52 is modified (4-aspartylphosphate). Residues 129–230 (EETFLIGGKL…EWGRGYRFGA (102 aa)) constitute a DNA-binding region (ompR/PhoB-type).

In terms of processing, phosphorylated by YrkQ.

The protein resides in the cytoplasm. Its function is as follows. Member of the two-component regulatory system YrkQ/YrkP. This is an uncharacterized protein from Bacillus subtilis (strain 168).